The sequence spans 572 residues: Phosphoenolpyruvate-protein phosphotransferase (572 aa).

The active-site Tele-phosphohistidine intermediate is the His191. Phosphoenolpyruvate-binding residues include Arg298 and Arg334. Glu433 and Asp457 together coordinate Mg(2+). Phosphoenolpyruvate contacts are provided by residues Asn456–Asp457 and Arg467. The active-site Proton donor is Cys504.

The protein belongs to the PEP-utilizing enzyme family. In terms of assembly, homodimer. Requires Mg(2+) as cofactor.

The protein localises to the cytoplasm. It carries out the reaction L-histidyl-[protein] + phosphoenolpyruvate = N(pros)-phospho-L-histidyl-[protein] + pyruvate. In terms of biological role, general (non sugar-specific) component of the phosphoenolpyruvate-dependent sugar phosphotransferase system (sugar PTS). This major carbohydrate active-transport system catalyzes the phosphorylation of incoming sugar substrates concomitantly with their translocation across the cell membrane. Enzyme I transfers the phosphoryl group from phosphoenolpyruvate (PEP) to the phosphoryl carrier protein (HPr). This Staphylococcus aureus (strain COL) protein is Phosphoenolpyruvate-protein phosphotransferase (ptsI).